The chain runs to 359 residues: Phospho-N-acetylmuramoyl-pentapeptide-transferase (359 aa).

10 helical membrane passes run 3–23 (QILI…PALI), 55–75 (VAII…GLAF), 80–100 (ISAS…VGFL), 117–137 (TAKT…ALGF), 156–176 (IATV…VVSA), 187–207 (LDGL…LITF), 231–251 (LAIV…WNAA), 255–275 (IFMG…ISVT), 280–300 (ILAV…VLQI), and 334–354 (FWLL…GEWL).

The protein belongs to the glycosyltransferase 4 family. MraY subfamily. The cofactor is Mg(2+).

Its subcellular location is the cell membrane. It carries out the reaction UDP-N-acetyl-alpha-D-muramoyl-L-alanyl-gamma-D-glutamyl-meso-2,6-diaminopimeloyl-D-alanyl-D-alanine + di-trans,octa-cis-undecaprenyl phosphate = di-trans,octa-cis-undecaprenyl diphospho-N-acetyl-alpha-D-muramoyl-L-alanyl-D-glutamyl-meso-2,6-diaminopimeloyl-D-alanyl-D-alanine + UMP. Its pathway is cell wall biogenesis; peptidoglycan biosynthesis. In terms of biological role, catalyzes the initial step of the lipid cycle reactions in the biosynthesis of the cell wall peptidoglycan: transfers peptidoglycan precursor phospho-MurNAc-pentapeptide from UDP-MurNAc-pentapeptide onto the lipid carrier undecaprenyl phosphate, yielding undecaprenyl-pyrophosphoryl-MurNAc-pentapeptide, known as lipid I. In Mycobacterium avium (strain 104), this protein is Phospho-N-acetylmuramoyl-pentapeptide-transferase.